The primary structure comprises 259 residues: Exosome complex component Rrp42 (259 aa).

This sequence belongs to the RNase PH family. Rrp42 subfamily. In terms of assembly, component of the archaeal exosome complex. Forms a hexameric ring-like arrangement composed of 3 Rrp41-Rrp42 heterodimers. The hexameric ring associates with a trimer of Rrp4 and/or Csl4 subunits.

It localises to the cytoplasm. In terms of biological role, non-catalytic component of the exosome, which is a complex involved in RNA degradation. Contributes to the structuring of the Rrp41 active site. This Archaeoglobus fulgidus (strain ATCC 49558 / DSM 4304 / JCM 9628 / NBRC 100126 / VC-16) protein is Exosome complex component Rrp42.